Here is a 350-residue protein sequence, read N- to C-terminus: 3'-hydroxy-N-methyl-(S)-coclaurine 4'-O-methyltransferase (350 aa).

5 residues coordinate S-adenosyl-L-methionine: G196, D219, D239, M240, and K253. Catalysis depends on H257, which acts as the Proton acceptor.

This sequence belongs to the class I-like SAM-binding methyltransferase superfamily. Cation-independent O-methyltransferase family. COMT subfamily. As to quaternary structure, homodimer.

The catalysed reaction is (S)-3'-hydroxy-N-methylcoclaurine + S-adenosyl-L-methionine = (S)-reticuline + S-adenosyl-L-homocysteine + H(+). The protein operates within alkaloid biosynthesis; (S)-reticuline biosynthesis; (S)-reticuline from (S)-norcoclaurine: step 4/4. In terms of biological role, catalyzes the transfer of the methyl group to the 4'-hydroxyl group of 3'-hydroxy-N-methylcoclaurine to form reticuline. The polypeptide is 3'-hydroxy-N-methyl-(S)-coclaurine 4'-O-methyltransferase (Coptis japonica (Japanese goldthread)).